The primary structure comprises 441 residues: Ribulose bisphosphate carboxylase large chain (441 aa).

Substrate-binding residues include Asn-89 and Thr-139. The active-site Proton acceptor is Lys-141. Lys-143 provides a ligand contact to substrate. Lys-167, Asp-169, and Glu-170 together coordinate Mg(2+). Lys-167 carries the post-translational modification N6-carboxylysine. His-260 acts as the Proton acceptor in catalysis. Arg-261, His-293, and Ser-345 together coordinate substrate.

The protein belongs to the RuBisCO large chain family. Type I subfamily. Heterohexadecamer of 8 large chains and 8 small chains; disulfide-linked. The disulfide link is formed within the large subunit homodimers. Mg(2+) is required as a cofactor. Post-translationally, the disulfide bond which can form in the large chain dimeric partners within the hexadecamer appears to be associated with oxidative stress and protein turnover.

It is found in the plastid. Its subcellular location is the chloroplast. The catalysed reaction is 2 (2R)-3-phosphoglycerate + 2 H(+) = D-ribulose 1,5-bisphosphate + CO2 + H2O. It catalyses the reaction D-ribulose 1,5-bisphosphate + O2 = 2-phosphoglycolate + (2R)-3-phosphoglycerate + 2 H(+). In terms of biological role, ruBisCO catalyzes two reactions: the carboxylation of D-ribulose 1,5-bisphosphate, the primary event in carbon dioxide fixation, as well as the oxidative fragmentation of the pentose substrate in the photorespiration process. Both reactions occur simultaneously and in competition at the same active site. This chain is Ribulose bisphosphate carboxylase large chain, found in Coriandrum sativum (Coriander).